A 480-amino-acid polypeptide reads, in one-letter code: Probable E3 ubiquitin protein ligase DRIPH (480 aa).

The RING-type zinc finger occupies 16–57 (CPICTNPFKDATTISECLHTFCRSCIRNKFINERVNACPVCN). Disordered regions lie at residues 93-133 (GPKT…EPAN), 167-193 (RGRKASLPKKIDSKPEPELPPKEPKIK), 241-261 (TPPDIVEPEISSDDDTEESVE), and 280-356 (VNQN…EMKV). Residues 103-112 (SSKKKRKSRT) are compositionally biased toward basic residues. Low complexity predominate over residues 113 to 133 (SLRVSSSRVSSSPDTPLEPAN). Residues 175–193 (KKIDSKPEPELPPKEPKIK) show a composition bias toward basic and acidic residues. A compositionally biased stretch (acidic residues) spans 246–260 (VEPEISSDDDTEESV). Polar residues predominate over residues 298–309 (GQKLKTNGAATS).

It catalyses the reaction S-ubiquitinyl-[E2 ubiquitin-conjugating enzyme]-L-cysteine + [acceptor protein]-L-lysine = [E2 ubiquitin-conjugating enzyme]-L-cysteine + N(6)-ubiquitinyl-[acceptor protein]-L-lysine.. It participates in protein modification; protein ubiquitination. This is Probable E3 ubiquitin protein ligase DRIPH from Arabidopsis thaliana (Mouse-ear cress).